A 1227-amino-acid polypeptide reads, in one-letter code: Protein transport protein Sec31A (1227 aa).

7 WD repeats span residues 4–47 (KEID…EIFE), 64–111 (SSAH…AGDT), 120–160 (KHTG…TPMT), 166–206 (QPLE…PIIK), 209–254 (DHNN…SPLR), 258–298 (SHTR…VLYE), and 301–342 (TNMQ…DGLR). Residues 397–430 (SFSFGGKLVTFENAKPQQQPGIDQQPQHHYVYVS) form a WD 8; interaction with SEC13 repeat. Disordered stretches follow at residues 804–875 (EAIK…YSQA), 905–1008 (QPVA…GWND), and 1040–1075 (ADPQ…LGPY). A compositionally biased stretch (low complexity) spans 905–924 (QPVAAPASASYPSPASNTNP). Positions 925-945 (PYLPAAQPVPSPLYPGQPQPS) are enriched in pro residues. Polar residues predominate over residues 995-1006 (PASQRTGPQNGW). Over residues 1040–1049 (ADPQAQMQQP) the composition is skewed to low complexity. The span at 1057–1069 (PSFQPQQLSTGQQ) shows a compositional bias: polar residues.

This sequence belongs to the WD repeat SEC31 family. As to quaternary structure, COPII is composed of at least 5 proteins: the SEC23/24 complex, the SEC13/31 complex and SAR1. SEC13 and SEC31 make a 2:2 tetramer that forms the edge element of the COPII outer coat. The tetramer self-assembles in multiple copies to form the complete polyhedral cage. Interacts (via WD 8) with SEC13.

It localises to the cytoplasm. The protein localises to the cytoplasmic vesicle. Its subcellular location is the COPII-coated vesicle membrane. It is found in the endoplasmic reticulum membrane. In terms of biological role, component of the coat protein complex II (COPII) which promotes the formation of transport vesicles from the endoplasmic reticulum (ER). The coat has two main functions, the physical deformation of the endoplasmic reticulum membrane into vesicles and the selection of cargo molecules. The sequence is that of Protein transport protein Sec31A (SEC31A) from Gallus gallus (Chicken).